A 526-amino-acid chain; its full sequence is Protein spinster homolog 1 (526 aa).

The tract at residues Met1–His43 is disordered. 12 helical membrane-spanning segments follow: residues His48–Ile68, Gly98–Leu118, Leu126–Ser146, Leu159–Phe179, Met187–Ser207, Trp218–Ala238, Phe272–Trp292, Met321–Ile341, Leu355–Ala375, Phe385–Leu405, Leu419–Ile439, and Met463–Ile483.

It belongs to the major facilitator superfamily. Spinster (TC 2.A.1.49) family.

It is found in the lysosome membrane. The enzyme catalyses a 1-acyl-sn-glycero-3-phosphocholine(out) + H(+)(out) = a 1-acyl-sn-glycero-3-phosphocholine(in) + H(+)(in). It catalyses the reaction a 1-acyl-sn-glycero-3-phosphoethanolamine(out) + H(+)(out) = a 1-acyl-sn-glycero-3-phosphoethanolamine(in) + H(+)(in). The catalysed reaction is a 1-O-(1Z-alkenyl)-sn-glycero-3-phosphocholine(out) + H(+)(out) = a 1-O-(1Z-alkenyl)-sn-glycero-3-phosphocholine(in) + H(+)(in). It carries out the reaction a 1-O-(1Z-alkenyl)-sn-glycero-3-phosphoethanolamine(out) + H(+)(out) = a 1-O-(1Z-alkenyl)-sn-glycero-3-phosphoethanolamine(in) + H(+)(in). Mediates the rate-limiting, proton-dependent, lysosomal efflux of lysophospholipids. Selective for zwitterionic headgroups such as lysophosphatidylcholine (LPC) and lysophosphatidylethanolamine (LPE). Essential player in lysosomal homeostasis. This is Protein spinster homolog 1 (spns1) from Xenopus tropicalis (Western clawed frog).